Consider the following 261-residue polypeptide: MICOS complex subunit Mic25 (261 aa).

Gly2 is lipidated: N-myristoyl glycine. Residues Ser13, Ser31, and Ser33 each carry the phosphoserine modification. Disordered stretches follow at residues 39–59, 81–114, and 140–165; these read KDCS…PECS, CGPA…VKED, and TEKH…RLTR. A coiled-coil region spans residues 109 to 202; the sequence is SAVKEDLKKF…AELYKLSSQQ (94 aa). Residues 154–165 are compositionally biased toward basic and acidic residues; it reads THEQQQSDRLTR. The CHCH domain maps to 220-261; the sequence is EPVCSGLQAQILRCYRDHLHEVLLCSDLAKAYQHCVSTARKG. 2 consecutive short sequence motifs (cx9C motif) follow at residues 223 to 233 and 244 to 254; these read CSGLQAQILRC and CSDLAKAYQHC. 2 cysteine pairs are disulfide-bonded: Cys223-Cys254 and Cys233-Cys244.

Belongs to the MICOS complex subunit Mic19 family. Metazoan Mic25 subfamily. As to quaternary structure, component of the mitochondrial contact site and cristae organizing system (MICOS) complex, composed of at least MICOS10/MIC10, CHCHD3/MIC19, CHCHD6/MIC25, APOOL/MIC27, IMMT/MIC60, APOO/MIC23/MIC26 and MICOS13/MIC13. This complex was also known under the names MINOS or MitOS complex. The MICOS complex associates with mitochondrial outer membrane proteins SAMM50, MTX1 and MTX2 (together described as components of the mitochondrial outer membrane sorting assembly machinery (SAM) complex) and DNAJC11, mitochondrial inner membrane protein TMEM11 and with HSPA9. The MICOS and SAM complexes together with DNAJC11 are part of a large protein complex spanning both membranes termed the mitochondrial intermembrane space bridging (MIB) complex. Interacts with DISC1. Interacts with IMMT/MIC60.

The protein localises to the mitochondrion inner membrane. The protein resides in the mitochondrion. Functionally, component of the MICOS complex, a large protein complex of the mitochondrial inner membrane that plays crucial roles in the maintenance of crista junctions, inner membrane architecture, and formation of contact sites to the outer membrane. The sequence is that of MICOS complex subunit Mic25 (Chchd6) from Rattus norvegicus (Rat).